The sequence spans 278 residues: Checkpoint protein Hus1-like (278 aa).

The protein belongs to the HUS1 family. As to quaternary structure, component of the 9-1-1 checkpoint clamp complex consisting of Rad9 isoform A, Rad1 and Hus1-like; the interactions with Rad1 and Rad9 are direct. This complex probably also forms with Rad9 isoform B, however 9-1-1 complex containing Rad9 isoform A localizes to the nuclear periphery. In terms of tissue distribution, expressed in ovary.

Its subcellular location is the cytoplasm. It localises to the nucleus envelope. Its function is as follows. Component of the 9-1-1 checkpoint clamp complex. Involved in both meiotic and somatic DNA damage responses. Essential for activation of the meiotic checkpoint in response to double-strand DNA breaks; required for the S-phase checkpoint but not the G2-M phase checkpoint. Involved in double strand break repair by homologous recombination during meiosis; influences the organization of chromosomal DNA in the meiotic nucleus. This is Checkpoint protein Hus1-like from Drosophila melanogaster (Fruit fly).